We begin with the raw amino-acid sequence, 576 residues long: RING finger and SPRY domain-containing protein 1 (576 aa).

A signal peptide spans 1–16 (MIVFGWAVFLASRSLG). Ser50 is subject to Phosphoserine. The segment at 50–99 (SGTDDSVDTQQQQAENSAVPTADTRSQPRDPVRPPRRGRGPHEPRRKKQN) is disordered. A compositionally biased stretch (polar residues) spans 57 to 68 (DTQQQQAENSAV). Basic residues predominate over residues 83–97 (PPRRGRGPHEPRRKK). Residues 300–483 (LFLKEGRQLT…CEFNFGAKPF (184 aa)) form the B30.2/SPRY domain. Asn314 carries an N-linked (GlcNAc...) asparagine glycan. An RING-type zinc finger spans residues 527–562 (CSLCCDEVADTQLKPCGHSDLCMDCALQLETCPLCR).

The protein localises to the secreted. The polypeptide is RING finger and SPRY domain-containing protein 1 (RSPRY1) (Homo sapiens (Human)).